A 91-amino-acid polypeptide reads, in one-letter code: MAHKKGQGSSRNGRDSNPQYRGVKVYGGETVSAGSILVRQVGTVIHAGANVKLGRDFTLYSVVDGVVKYERLGRDRKKVSVYPAAAEQASA.

The interval 1–22 is disordered; it reads MAHKKGQGSSRNGRDSNPQYRG. Residues 7–19 show a composition bias toward polar residues; it reads QGSSRNGRDSNPQ.

This sequence belongs to the bacterial ribosomal protein bL27 family.

The chain is Large ribosomal subunit protein bL27 from Myxococcus xanthus (strain DK1622).